The primary structure comprises 651 residues: MSEKLYPVLPEAKKNTLIDNETYLEWYEESMSDPDGFWAKHGRRIDWFKPFTKVKNTDFNGDVTIKWYEDGVTNVSYNCIDRHLKSRGDKVAIIWEGDNPYIDKKITYRELYENVCRMANVLKKHGVKKGDRVTIYLPMIPEAAYAMLACARIGAVHSVVFAGFSPEALAGRIVDCESTFVITADEGVRGGKPVALKENTDTAIDIAAKQYVMVNKVLVVRRTGGKVSWGRGRDLWYHQEVASVEPHCEPEPMNAEDPLFILYTSGSTGKPKGVLHTTGGYLVYASMTHQYVFDYHDGEIYWCTADVGWVTGHSYIVYGPLANGATTLMFEGVPNFPDQGRFWEVVDKHHVNIFYTAPTALRALMGAGDEFVTRSSRSTLRLLGSVGEPINPEAWEWYYNVVGDQKCPIVDTWWQTENGGILITPLPGATDLKPGSATRPFFGVKPVLVDNEGNVQEGVADGNLCISDSWPGQMRTVYGDHKRFIETYFSTYKGMYFSGDGCRRDEDGYYWITGRVDDVLNISGHRLGTAEIESALVSHHSVSEAAVVGYPHPIKGQGIYCYVTLMTGADAQDPDELRKELVQHVRKEIGPIATPDKIQFAPGLPKTRSGKIMRRILRKIAEDEFGALGDTSTLADPGVVDDLIENRQNKK.

Residues 189–192 (RGGK), T311, and N335 each bind CoA. ATP-binding positions include 387-389 (GEP), 411-416 (DTWWQT), D500, and R515. S523 lines the CoA pocket. R526 contacts ATP. Positions 537, 539, and 542 each coordinate Mg(2+). CoA is bound at residue R586. K611 bears the N6-acetyllysine mark.

The protein belongs to the ATP-dependent AMP-binding enzyme family. Mg(2+) serves as cofactor. Post-translationally, acetylated. Deacetylation by the SIR2-homolog deacetylase activates the enzyme.

It carries out the reaction acetate + ATP + CoA = acetyl-CoA + AMP + diphosphate. Functionally, catalyzes the conversion of acetate into acetyl-CoA (AcCoA), an essential intermediate at the junction of anabolic and catabolic pathways. AcsA undergoes a two-step reaction. In the first half reaction, AcsA combines acetate with ATP to form acetyl-adenylate (AcAMP) intermediate. In the second half reaction, it can then transfer the acetyl group from AcAMP to the sulfhydryl group of CoA, forming the product AcCoA. The protein is Acetyl-coenzyme A synthetase of Brucella suis (strain ATCC 23445 / NCTC 10510).